A 342-amino-acid chain; its full sequence is S-adenosylmethionine:tRNA ribosyltransferase-isomerase (342 aa).

This sequence belongs to the QueA family. As to quaternary structure, monomer.

The protein localises to the cytoplasm. It catalyses the reaction 7-aminomethyl-7-carbaguanosine(34) in tRNA + S-adenosyl-L-methionine = epoxyqueuosine(34) in tRNA + adenine + L-methionine + 2 H(+). It participates in tRNA modification; tRNA-queuosine biosynthesis. Functionally, transfers and isomerizes the ribose moiety from AdoMet to the 7-aminomethyl group of 7-deazaguanine (preQ1-tRNA) to give epoxyqueuosine (oQ-tRNA). The polypeptide is S-adenosylmethionine:tRNA ribosyltransferase-isomerase (Bacillus subtilis (strain 168)).